Reading from the N-terminus, the 245-residue chain is Polyhedrin (245 aa).

Belongs to the polyhedrin family.

Its function is as follows. Major component of the virus occlusion bodies, which are large proteinaceous structures (polyhedra), that protect the virus from the outside environment for extended periods until they are ingested by insect larvae. This is Polyhedrin (PH) from Hyphantria cunea nuclear polyhedrosis virus (HcNPV).